Here is a 381-residue protein sequence, read N- to C-terminus: Na(+)/H(+) antiporter NhaA 1 (381 aa).

11 helical membrane passes run 18 to 38 (GLLL…SYSA), 53 to 73 (ITHW…GLEL), 89 to 109 (SLPI…FLAL), 118 to 138 (GAGI…SLLG), 147 to 167 (VFLT…IAVF), 170 to 190 (TSIG…LFVL), 210 to 230 (YFML…AFVI), 251 to 271 (PVAF…AIES), 283 to 303 (FGII…FSSI), 321 to 341 (ILGA…ITLL), and 348 to 368 (IIVF…ITGF).

The protein belongs to the NhaA Na(+)/H(+) (TC 2.A.33) antiporter family.

Its subcellular location is the cell inner membrane. It catalyses the reaction Na(+)(in) + 2 H(+)(out) = Na(+)(out) + 2 H(+)(in). Its function is as follows. Na(+)/H(+) antiporter that extrudes sodium in exchange for external protons. The protein is Na(+)/H(+) antiporter NhaA 1 of Flavobacterium johnsoniae (strain ATCC 17061 / DSM 2064 / JCM 8514 / BCRC 14874 / CCUG 350202 / NBRC 14942 / NCIMB 11054 / UW101) (Cytophaga johnsonae).